Consider the following 770-residue polypeptide: 3-isopropylmalate dehydratase (770 aa).

[4Fe-4S] cluster is bound by residues cysteine 354, cysteine 415, and cysteine 418.

This sequence belongs to the aconitase/IPM isomerase family. As to quaternary structure, monomer. The cofactor is [4Fe-4S] cluster.

It carries out the reaction (2R,3S)-3-isopropylmalate = (2S)-2-isopropylmalate. It participates in amino-acid biosynthesis; L-leucine biosynthesis; L-leucine from 3-methyl-2-oxobutanoate: step 2/4. In terms of biological role, catalyzes the isomerization between 2-isopropylmalate and 3-isopropylmalate, via the formation of 2-isopropylmaleate. The protein is 3-isopropylmalate dehydratase (LEU1) of Candida maltosa (Yeast).